We begin with the raw amino-acid sequence, 179 residues long: tRNA (cytidine(56)-2'-O)-methyltransferase (179 aa).

An S-adenosyl-L-methionine-binding site is contributed by Leu84.

This sequence belongs to the aTrm56 family. As to quaternary structure, homodimer.

The protein localises to the cytoplasm. It carries out the reaction cytidine(56) in tRNA + S-adenosyl-L-methionine = 2'-O-methylcytidine(56) in tRNA + S-adenosyl-L-homocysteine + H(+). Specifically catalyzes the AdoMet-dependent 2'-O-ribose methylation of cytidine at position 56 in tRNAs. The protein is tRNA (cytidine(56)-2'-O)-methyltransferase of Methanothermobacter thermautotrophicus (strain ATCC 29096 / DSM 1053 / JCM 10044 / NBRC 100330 / Delta H) (Methanobacterium thermoautotrophicum).